A 246-amino-acid chain; its full sequence is 5-oxoprolinase subunit A (246 aa).

Belongs to the LamB/PxpA family. In terms of assembly, forms a complex composed of PxpA, PxpB and PxpC.

The catalysed reaction is 5-oxo-L-proline + ATP + 2 H2O = L-glutamate + ADP + phosphate + H(+). Its function is as follows. Catalyzes the cleavage of 5-oxoproline to form L-glutamate coupled to the hydrolysis of ATP to ADP and inorganic phosphate. This is 5-oxoprolinase subunit A from Vibrio cholerae serotype O1 (strain M66-2).